We begin with the raw amino-acid sequence, 171 residues long: Squamosa promoter-binding protein 2 (171 aa).

2 disordered regions span residues glycine 20–valine 46 and lysine 57–glycine 76. Residues glutamate 22–glutamine 40 show a composition bias toward acidic residues. Residues glutamine 82–serine 159 form an SBP-type zinc finger. Zn(2+) contacts are provided by cysteine 85, cysteine 90, cysteine 107, histidine 110, cysteine 126, cysteine 129, histidine 133, and cysteine 145. Residues lysine 142–lysine 158 carry the Bipartite nuclear localization signal motif. A compositionally biased stretch (basic residues) spans leucine 149 to lysine 158. The tract at residues leucine 149–arginine 171 is disordered. Basic and acidic residues predominate over residues serine 159–arginine 171.

The protein localises to the nucleus. Probable transcriptional factor. Binds to the promoter of the SQUAMOSA gene. The polypeptide is Squamosa promoter-binding protein 2 (SBP2) (Antirrhinum majus (Garden snapdragon)).